A 990-amino-acid polypeptide reads, in one-letter code: Kinesin-related protein 5 (990 aa).

Positions Asn-6–Ile-330 constitute a Kinesin motor domain. Gly-83–Thr-90 is an ATP binding site. 2 disordered regions span residues Gln-401–Asp-485 and Phe-732–Gln-788. Positions Ser-406–Ser-418 are enriched in gly residues. 2 stretches are compositionally biased toward low complexity: residues Thr-466 to Asp-485 and Ser-733 to Asn-781. A coiled-coil region spans residues Ile-513–Ile-948.

The protein belongs to the TRAFAC class myosin-kinesin ATPase superfamily. Kinesin family. Kinesin subfamily. Interacts with actin.

The protein localises to the cytoplasm. It localises to the cytoskeleton. Functionally, microtubule-associated force-producing protein that plays a role in organelle transport. Its motor activity is directed toward the microtubule's plus end. May connect microtubules to actin filaments. Associates with actin-based structures in cells and is likely involved in the organization of actin cytoskeletons in such structures. The chain is Kinesin-related protein 5 (kif5) from Dictyostelium discoideum (Social amoeba).